The sequence spans 199 residues: NAD(P)H dehydrogenase (quinone) (199 aa).

One can recognise a Flavodoxin-like domain in the interval 4–190; that stretch reads VLVLYYSAYG…NGARYQGRTI (187 aa). Residues 10–15 and 78–80 contribute to the FMN site; these read SAYGHI and TRF. Residue Tyr-12 coordinates NAD(+). A substrate-binding site is contributed by Trp-98. FMN-binding positions include 113–119 and His-134; that span reads STATQHG.

It belongs to the WrbA family. The cofactor is FMN.

It catalyses the reaction a quinone + NADH + H(+) = a quinol + NAD(+). It carries out the reaction a quinone + NADPH + H(+) = a quinol + NADP(+). This is NAD(P)H dehydrogenase (quinone) from Afipia carboxidovorans (strain ATCC 49405 / DSM 1227 / KCTC 32145 / OM5) (Oligotropha carboxidovorans).